A 209-amino-acid polypeptide reads, in one-letter code: Uracil phosphoribosyltransferase (209 aa).

5-phospho-alpha-D-ribose 1-diphosphate is bound by residues arginine 79, arginine 104, and aspartate 131 to serine 139. Uracil-binding positions include isoleucine 194 and glycine 199 to alanine 201. Aspartate 200 contacts 5-phospho-alpha-D-ribose 1-diphosphate.

Belongs to the UPRTase family. Mg(2+) serves as cofactor.

It carries out the reaction UMP + diphosphate = 5-phospho-alpha-D-ribose 1-diphosphate + uracil. It functions in the pathway pyrimidine metabolism; UMP biosynthesis via salvage pathway; UMP from uracil: step 1/1. Its activity is regulated as follows. Allosterically activated by GTP. Functionally, catalyzes the conversion of uracil and 5-phospho-alpha-D-ribose 1-diphosphate (PRPP) to UMP and diphosphate. This is Uracil phosphoribosyltransferase from Staphylococcus carnosus (strain TM300).